The following is a 249-amino-acid chain: Leucyl/phenylalanyl-tRNA--protein transferase (249 aa).

The protein belongs to the L/F-transferase family.

Its subcellular location is the cytoplasm. It catalyses the reaction N-terminal L-lysyl-[protein] + L-leucyl-tRNA(Leu) = N-terminal L-leucyl-L-lysyl-[protein] + tRNA(Leu) + H(+). It carries out the reaction N-terminal L-arginyl-[protein] + L-leucyl-tRNA(Leu) = N-terminal L-leucyl-L-arginyl-[protein] + tRNA(Leu) + H(+). The enzyme catalyses L-phenylalanyl-tRNA(Phe) + an N-terminal L-alpha-aminoacyl-[protein] = an N-terminal L-phenylalanyl-L-alpha-aminoacyl-[protein] + tRNA(Phe). Functions in the N-end rule pathway of protein degradation where it conjugates Leu, Phe and, less efficiently, Met from aminoacyl-tRNAs to the N-termini of proteins containing an N-terminal arginine or lysine. This is Leucyl/phenylalanyl-tRNA--protein transferase from Xanthomonas axonopodis pv. citri (strain 306).